Here is a 318-residue protein sequence, read N- to C-terminus: Tyrosine recombinase XerD (318 aa).

Positions Pro-5–Leu-90 constitute a Core-binding (CB) domain. The Tyr recombinase domain occupies Gly-111–Arg-310. Catalysis depends on residues Arg-161, Lys-185, His-262, Arg-265, and His-288. Tyr-297 functions as the O-(3'-phospho-DNA)-tyrosine intermediate in the catalytic mechanism.

This sequence belongs to the 'phage' integrase family. XerD subfamily. As to quaternary structure, forms a cyclic heterotetrameric complex composed of two molecules of XerC and two molecules of XerD.

It is found in the cytoplasm. Functionally, site-specific tyrosine recombinase, which acts by catalyzing the cutting and rejoining of the recombining DNA molecules. The XerC-XerD complex is essential to convert dimers of the bacterial chromosome into monomers to permit their segregation at cell division. It also contributes to the segregational stability of plasmids. The protein is Tyrosine recombinase XerD of Bradyrhizobium diazoefficiens (strain JCM 10833 / BCRC 13528 / IAM 13628 / NBRC 14792 / USDA 110).